The following is a 247-amino-acid chain: UPF0259 membrane protein BUsg_265 (247 aa).

6 helical membrane passes run 20–40 (IKII…INVL), 82–102 (IFKI…IITL), 114–134 (IQFS…LNFI), 137–157 (FFIQ…SVLL), 188–208 (IVGT…TVFS), and 217–237 (FIFL…IVYL).

The protein belongs to the UPF0259 family.

The protein localises to the cell membrane. This is UPF0259 membrane protein BUsg_265 from Buchnera aphidicola subsp. Schizaphis graminum (strain Sg).